The primary structure comprises 64 residues: uncharacterized protein (64 aa).

Its subcellular location is the host cytoplasm. This is an uncharacterized protein from Enterobacteriaceae (Bacteriophage Mu).